A 311-amino-acid chain; its full sequence is MHGVLKVRTSEEKAKAQRLKELEKIESYNKLVKSFEELREKQNGRYDEISLSVSKLVLIENPEFYTIWNYRRLAILQFTETKENSELQVIYQNEMKFLEECIQRFTKSYWIWFHRQWIALRMDNCDWEREMKLCTKLLNFDLRNFHCWGHRRFILKHSNIKLEDELKYTTEKVEQNFSNYSAWHQRSSILPKIYKEPEQLLEKILEEFELVRNAVYTEPKDSSSWIYHKWLVATIKSIPNSNYIEVLKNELTQIYDLIELEPDCKWPIYTTLLLKIEIGGFEKQELLDIISQLIKLDPDHKNYYKSLETKI.

The stretch at 12-43 (EKAKAQRLKELEKIESYNKLVKSFEELREKQN) forms a coiled coil. PFTA repeat units lie at residues 49–82 (ISLSVSKLVLIENPEFYTIWNYRRLAILQFTETK), 93–126 (NEMKFLEECIQRFTKSYWIWFHRQWIALRMDNCD), 129–162 (REMKLCTKLLNFDLRNFHCWGHRRFILKHSNIKL), 164–197 (DELKYTTEKVEQNFSNYSAWHQRSSILPKIYKEP), and 206–239 (EEFELVRNAVYTEPKDSSSWIYHKWLVATIKSIP).

Belongs to the protein prenyltransferase subunit alpha family. In terms of assembly, heterodimer of an alpha and a beta subunit.

It catalyses the reaction geranylgeranyl diphosphate + L-cysteinyl-[protein] = S-geranylgeranyl-L-cysteinyl-[protein] + diphosphate. Functionally, catalyzes the transfer of a geranylgeranyl moiety from geranylgeranyl diphosphate to proteins with a C-terminal sequence motif -XCC or -XCXC, where both cysteines may become modified. The chain is Geranylgeranyl transferase type-2 subunit alpha (rabggta) from Dictyostelium discoideum (Social amoeba).